The sequence spans 94 residues: Co-chaperonin GroES (94 aa).

It belongs to the GroES chaperonin family. In terms of assembly, heptamer of 7 subunits arranged in a ring. Interacts with the chaperonin GroEL.

It localises to the cytoplasm. Together with the chaperonin GroEL, plays an essential role in assisting protein folding. The GroEL-GroES system forms a nano-cage that allows encapsulation of the non-native substrate proteins and provides a physical environment optimized to promote and accelerate protein folding. GroES binds to the apical surface of the GroEL ring, thereby capping the opening of the GroEL channel. In Ehrlichia chaffeensis (strain ATCC CRL-10679 / Arkansas), this protein is Co-chaperonin GroES.